Here is a 468-residue protein sequence, read N- to C-terminus: Heat stress transcription factor A-1e (468 aa).

A DNA-binding region spans residues 21–115; sequence IPPFLSKTYD…ILKSIVRRKP (95 aa). Residues 133–199 are hydrophobic repeat HR-A/B; the sequence is ACVEVGKFGL…QMMSFLAKAV (67 aa). Residues 211 to 220 show a composition bias toward polar residues; it reads QSNEANQHIS. 2 disordered regions span residues 211–244 and 268–309; these read QSNE…VNGL and QMSN…PEVT. Residues 223 to 227 carry the Nuclear localization signal motif; the sequence is NKKRR. Positions 277-305 are enriched in low complexity; sequence SLSSNNGSFLLGDVPNSNISDNGSSSNGS. The AHA signature appears at 402-411; the sequence is DSFWEQFIGE. Residues 454–461 carry the Nuclear export signal motif; that stretch reads LTEQMGLL.

The protein belongs to the HSF family. Class A subfamily. In terms of assembly, homotrimer. In terms of processing, exhibits temperature-dependent phosphorylation.

The protein resides in the cytoplasm. The protein localises to the nucleus. Its function is as follows. Transcriptional activator that specifically binds DNA sequence 5'-AGAAnnTTCT-3' known as heat shock promoter elements (HSE). The sequence is that of Heat stress transcription factor A-1e (HSFA1E) from Arabidopsis thaliana (Mouse-ear cress).